Here is a 244-residue protein sequence, read N- to C-terminus: Rho-related GTP-binding protein RhoE (244 aa).

Residue 30 to 37 (GDSQCGKT) participates in GTP binding. Residues 52 to 60 (YVPTVFENY) carry the Effector region motif. Residues 77–81 (DTSGS) and 135–138 (CKSD) each bind GTP. Cysteine 241 bears the Cysteine methyl ester mark. Cysteine 241 carries the S-farnesyl cysteine lipid modification. Positions 242 to 244 (TVM) are cleaved as a propeptide — removed in mature form.

It belongs to the small GTPase superfamily. Rho family. As to quaternary structure, binds ROCK1. Interacts with UBXD5. In terms of tissue distribution, ubiquitous.

The protein localises to the golgi apparatus membrane. Its function is as follows. Binds GTP but lacks intrinsic GTPase activity and is resistant to Rho-specific GTPase-activating proteins. The sequence is that of Rho-related GTP-binding protein RhoE (RND3) from Homo sapiens (Human).